The primary structure comprises 113 residues: Iron-sulfur cluster insertion protein ErpA (113 aa).

C41, C105, and C107 together coordinate iron-sulfur cluster.

It belongs to the HesB/IscA family. In terms of assembly, homodimer. It depends on iron-sulfur cluster as a cofactor.

Required for insertion of 4Fe-4S clusters for at least IspG. This is Iron-sulfur cluster insertion protein ErpA from Histophilus somni (strain 129Pt) (Haemophilus somnus).